Reading from the N-terminus, the 130-residue chain is Small ribosomal subunit protein uS9 (130 aa).

Positions 98 to 130 (LKRAGLLTRDPRMKERKKPGLKKARRSPQFSKR) are disordered. Basic residues predominate over residues 111–130 (KERKKPGLKKARRSPQFSKR).

Belongs to the universal ribosomal protein uS9 family.

The polypeptide is Small ribosomal subunit protein uS9 (Staphylococcus epidermidis (strain ATCC 35984 / DSM 28319 / BCRC 17069 / CCUG 31568 / BM 3577 / RP62A)).